A 196-amino-acid polypeptide reads, in one-letter code: SPRY domain-containing protein 7 (196 aa).

Residues 1–184 (MAASVFCCLR…FSEFYHTPPP (184 aa)) enclose the B30.2/SPRY domain.

The protein is SPRY domain-containing protein 7 (SPRYD7) of Gallus gallus (Chicken).